A 264-amino-acid polypeptide reads, in one-letter code: Thymidylate synthase (264 aa).

Arg21 serves as a coordination point for dUMP. His51 is a binding site for (6R)-5,10-methylene-5,6,7,8-tetrahydrofolate. 126–127 (RR) serves as a coordination point for dUMP. Cys146 (nucleophile) is an active-site residue. Residues 166–169 (RSAD), Asn177, and 207–209 (HIY) each bind dUMP. A (6R)-5,10-methylene-5,6,7,8-tetrahydrofolate-binding site is contributed by Asp169. Ser263 is a binding site for (6R)-5,10-methylene-5,6,7,8-tetrahydrofolate.

Belongs to the thymidylate synthase family. Bacterial-type ThyA subfamily. Homodimer.

It is found in the cytoplasm. The enzyme catalyses dUMP + (6R)-5,10-methylene-5,6,7,8-tetrahydrofolate = 7,8-dihydrofolate + dTMP. It functions in the pathway pyrimidine metabolism; dTTP biosynthesis. Its function is as follows. Catalyzes the reductive methylation of 2'-deoxyuridine-5'-monophosphate (dUMP) to 2'-deoxythymidine-5'-monophosphate (dTMP) while utilizing 5,10-methylenetetrahydrofolate (mTHF) as the methyl donor and reductant in the reaction, yielding dihydrofolate (DHF) as a by-product. This enzymatic reaction provides an intracellular de novo source of dTMP, an essential precursor for DNA biosynthesis. This Bacillus velezensis (strain DSM 23117 / BGSC 10A6 / LMG 26770 / FZB42) (Bacillus amyloliquefaciens subsp. plantarum) protein is Thymidylate synthase.